Reading from the N-terminus, the 325-residue chain is RNA ligase 1 (325 aa).

Mg(2+) serves as cofactor. Mn(2+) is required as a cofactor. In terms of processing, AMPylates itself (auto-AMPylation).

It catalyses the reaction ATP + (ribonucleotide)n-3'-hydroxyl + 5'-phospho-(ribonucleotide)m = (ribonucleotide)n+m + AMP + diphosphate.. Functionally, functions as an RNA ligase, in vitro. The ligation reaction entails three nucleotidyl transfer steps. In the first step, the RNA ligase reacts with ATP in the absence of nucleic acid to form a covalent ligase-AMP intermediate and release pyrophosphate. In step 2, the ligase-AMP binds to the nucleic acid and transfers the adenylate to the 5'-PO4 terminus to form an adenylylated intermediate. In step 3, the RNA ligase directs the attack of the 3'-OH on the 5'-phosphoanhydride linkage, resulting in a repaired 3'-5' phosphodiester and release of AMP. Exhibits selectivity for single-stranded RNA substrates and may not have nick-sealing activity on double-stranded DNA-RNA hybrids. May play a role in maintaining RNA integrity under stress conditions, for example in response to reactive oxygen species (ROS). In Danio rerio (Zebrafish), this protein is RNA ligase 1.